The primary structure comprises 705 residues: Protein arginine N-methyltransferase 7 (705 aa).

SAM-dependent MTase PRMT-type domains follow at residues 29 to 372 (QNSW…YSLW) and 381 to 705 (TKSV…QKKL).

It belongs to the class I-like SAM-binding methyltransferase superfamily. Protein arginine N-methyltransferase family. PRMT7 subfamily.

Functionally, essential arginine methyltransferase that can both catalyze the formation of omega-N monomethylarginine (MMA) and symmetrical dimethylarginine (sDMA). Specifically mediates the symmetrical dimethylation of arginine residues in the small nuclear ribonucleoproteins SmD1 and SmD3. This chain is Protein arginine N-methyltransferase 7 (Art7), found in Drosophila simulans (Fruit fly).